Here is an 887-residue protein sequence, read N- to C-terminus: 3-hydroxy-3-methylglutaryl-coenzyme A reductase (887 aa).

The Cytoplasmic segment spans residues 1-9; that stretch reads MLSRLFRMH. The helical transmembrane segment at 10–39 threads the bilayer; that stretch reads GLFVASHPWEVIVGTVTLTICMMSMNMFTG. The Lumenal portion of the chain corresponds to 40 to 56; that stretch reads NNKICGWNYECPKFEED. The helical transmembrane segment at 57-78 threads the bilayer; that stretch reads VLSSDIIILTITRCIAILYIYF. Residues 61 to 218 form the SSD domain; sequence DIIILTITRC…MTFFPACVSL (158 aa). Positions 75–78 match the INSIG-binding motif motif; the sequence is YIYF. Residues 79 to 89 lie on the Cytoplasmic side of the membrane; it reads QFQNLRQLGSK. A Glycyl lysine isopeptide (Lys-Gly) (interchain with G-Cter in ubiquitin) cross-link involves residue K89. A helical membrane pass occupies residues 90–114; that stretch reads YILGIAGLFTIFSSFVFSTVVIHFL. Over 115-123 the chain is Lumenal; it reads DKELTGLNE. Residues 124-149 traverse the membrane as a helical segment; it reads ALPFFLLLIDLSRASALAKFALSSNS. Residues 150 to 159 lie on the Cytoplasmic side of the membrane; the sequence is QDEVRENIAR. A helical membrane pass occupies residues 160 to 187; that stretch reads GMAILGPTFTLDALVECLVIGVGTMSGV. Over 188–191 the chain is Lumenal; sequence RQLE. The helical transmembrane segment at 192–220 threads the bilayer; it reads IMCCFGCMSVLANYFVFMTFFPACVSLVL. The Cytoplasmic portion of the chain corresponds to 221-248; it reads ELSRESREGRPIWQLSHFARVLEEEENK. Residue K248 forms a Glycyl lysine isopeptide (Lys-Gly) (interchain with G-Cter in ubiquitin) linkage. The chain crosses the membrane as a helical span at residues 249 to 275; that stretch reads PNPVTQRVKMIMSLGLVLVHAHSRWIA. The Lumenal segment spans residues 276 to 314; sequence DPSPQNSTAEQAKVSLGLDEDVSKRIEPSVSLWQFYLSK. N-linked (GlcNAc...) asparagine glycosylation occurs at N281. The chain crosses the membrane as a helical span at residues 315 to 339; it reads MISMDIEQVITLSLAFLLAVKYIFF. Topologically, residues 340–887 are cytoplasmic; it reads EQAETESTLS…LQGTCTKKAA (548 aa). Catalysis depends on charge relay system residues E558, K690, and D766. The active-site Proton donor is the H865. Position 871 is a phosphoserine (S871).

Belongs to the HMG-CoA reductase family. Homotetramer. Homodimer. Interacts (via its SSD) with INSIG1; the interaction, accelerated by sterols, leads to the recruitment of HMGCR to AMFR/gp78 for its ubiquitination by the sterol-mediated ERAD pathway. Interacts with UBIAD1. Post-translationally, undergoes sterol-mediated ubiquitination and ER-associated degradation (ERAD). Accumulation of sterols in the endoplasmic reticulum (ER) membrane, triggers binding of the reductase to the ER membrane protein INSIG1 or INSIG2. The INSIG1 binding leads to the recruitment of the ubiquitin ligase, AMFR/gp78, RNF139 or RNF145, initiating ubiquitination of the reductase. The ubiquitinated reductase is then extracted from the ER membrane and delivered to cytosolic 26S proteosomes by a mechanism probably mediated by the ATPase Valosin-containing protein VCP/p97. The INSIG2-binding leads to the recruitment of the ubiquitin ligase RNF139, initiating ubiquitination of the reductase. Lys-248 is the main site of ubiquitination. Ubiquitination is enhanced by the presence of a geranylgeranylated protein. N-glycosylated. Deglycosylated by NGLY1 on release from the endoplasmic reticulum (ER) in a sterol-mediated manner. In terms of processing, phosphorylated. Phosphorylation at Ser-871 reduces the catalytic activity.

The protein localises to the endoplasmic reticulum membrane. It localises to the peroxisome membrane. The enzyme catalyses (R)-mevalonate + 2 NADP(+) + CoA = (3S)-3-hydroxy-3-methylglutaryl-CoA + 2 NADPH + 2 H(+). It participates in metabolic intermediate biosynthesis; (R)-mevalonate biosynthesis; (R)-mevalonate from acetyl-CoA: step 3/3. Its activity is regulated as follows. Regulated by a negative feedback mechanism through sterols and non-sterol metabolites derived from mevalonate. Phosphorylation at Ser-871 down-regulates the catalytic activity. Its function is as follows. Catalyzes the conversion of (3S)-hydroxy-3-methylglutaryl-CoA (HMG-CoA) to mevalonic acid, the rate-limiting step in the synthesis of cholesterol and other isoprenoids, thus plays a critical role in cellular cholesterol homeostasis. The chain is 3-hydroxy-3-methylglutaryl-coenzyme A reductase (Hmgcr) from Mus musculus (Mouse).